The chain runs to 650 residues: ATP-dependent zinc metalloprotease FtsH (650 aa).

The Cytoplasmic portion of the chain corresponds to 1 to 10; sequence MKTKKSKSTL. The chain crosses the membrane as a helical span at residues 11-31; the sequence is WFWLIILLAIIVTIIIIAVTV. The Extracellular portion of the chain corresponds to 32 to 123; sequence KGTTQVISDA…LVYQGSVGMA (92 aa). Residues 124 to 144 traverse the membrane as a helical segment; sequence LLVSLAPLLIYVLLFGGIIWF. At 145–650 the chain is on the cytoplasmic side; the sequence is MMKSSSGAGA…DIKVEDLDID (506 aa). Position 217–224 (217–224) interacts with ATP; sequence GPPGTGKT. Zn(2+) is bound at residue His-437. Glu-438 is an active-site residue. The Zn(2+) site is built by His-441 and Asp-515.

The protein in the central section; belongs to the AAA ATPase family. In the C-terminal section; belongs to the peptidase M41 family. As to quaternary structure, homohexamer. Requires Zn(2+) as cofactor.

The protein localises to the cell membrane. In terms of biological role, acts as a processive, ATP-dependent zinc metallopeptidase for both cytoplasmic and membrane proteins. Plays a role in the quality control of integral membrane proteins. This chain is ATP-dependent zinc metalloprotease FtsH, found in Mesoplasma florum (strain ATCC 33453 / NBRC 100688 / NCTC 11704 / L1) (Acholeplasma florum).